The following is a 473-amino-acid chain: Photosystem II CP43 reaction center protein (473 aa).

Positions 1 to 14 (MKTLYSLRRFYPVE) are excised as a propeptide. N-acetylthreonine is present on threonine 15. Position 15 is a phosphothreonine (threonine 15). 5 helical membrane-spanning segments follow: residues 69–93 (LFEVAHFVPEKPMYEQGLILLPHLA), 134–155 (LLGPETLEESFPFFGYVWKDRN), 178–200 (KALYFGGVYDTWAPGGGDVRKIT), 255–275 (KPFAWARRAFVWSGEAYLSYS), and 291–312 (WFNNTAYPSEFYGPTGPEASQA). A [CaMn4O5] cluster-binding site is contributed by glutamate 367. A helical transmembrane segment spans residues 447–471 (RARAAAAGFEKGIDRDLEPVLSMTP).

Belongs to the PsbB/PsbC family. PsbC subfamily. As to quaternary structure, PSII is composed of 1 copy each of membrane proteins PsbA, PsbB, PsbC, PsbD, PsbE, PsbF, PsbH, PsbI, PsbJ, PsbK, PsbL, PsbM, PsbT, PsbX, PsbY, PsbZ, Psb30/Ycf12, at least 3 peripheral proteins of the oxygen-evolving complex and a large number of cofactors. It forms dimeric complexes. The cofactor is Binds multiple chlorophylls and provides some of the ligands for the Ca-4Mn-5O cluster of the oxygen-evolving complex. It may also provide a ligand for a Cl- that is required for oxygen evolution. PSII binds additional chlorophylls, carotenoids and specific lipids..

The protein resides in the plastid. It localises to the chloroplast thylakoid membrane. In terms of biological role, one of the components of the core complex of photosystem II (PSII). It binds chlorophyll and helps catalyze the primary light-induced photochemical processes of PSII. PSII is a light-driven water:plastoquinone oxidoreductase, using light energy to abstract electrons from H(2)O, generating O(2) and a proton gradient subsequently used for ATP formation. The chain is Photosystem II CP43 reaction center protein from Phalaenopsis aphrodite subsp. formosana (Moth orchid).